A 471-amino-acid chain; its full sequence is 3-isopropylmalate dehydratase large subunit (471 aa).

[4Fe-4S] cluster contacts are provided by cysteine 349, cysteine 409, and cysteine 412.

The protein belongs to the aconitase/IPM isomerase family. LeuC type 1 subfamily. Heterodimer of LeuC and LeuD. The cofactor is [4Fe-4S] cluster.

The catalysed reaction is (2R,3S)-3-isopropylmalate = (2S)-2-isopropylmalate. It participates in amino-acid biosynthesis; L-leucine biosynthesis; L-leucine from 3-methyl-2-oxobutanoate: step 2/4. In terms of biological role, catalyzes the isomerization between 2-isopropylmalate and 3-isopropylmalate, via the formation of 2-isopropylmaleate. The protein is 3-isopropylmalate dehydratase large subunit of Aliivibrio fischeri (strain ATCC 700601 / ES114) (Vibrio fischeri).